The following is a 104-amino-acid chain: UPF0213 protein plu4503 (104 aa).

The GIY-YIG domain maps to asparagine 4–arginine 79.

It belongs to the UPF0213 family.

The polypeptide is UPF0213 protein plu4503 (Photorhabdus laumondii subsp. laumondii (strain DSM 15139 / CIP 105565 / TT01) (Photorhabdus luminescens subsp. laumondii)).